Here is a 245-residue protein sequence, read N- to C-terminus: 8-amino-3,8-dideoxy-manno-octulosonate cytidylyltransferase (245 aa).

This sequence belongs to the KdsB family.

Its subcellular location is the cytoplasm. It catalyses the reaction 8-amino-3,8-dideoxy-alpha-D-manno-octulosonate + CTP = CMP-8-amino-3,8-dideoxy-alpha-D-manno-oct-2-ulosonate + diphosphate. It participates in bacterial outer membrane biogenesis; lipopolysaccharide biosynthesis. Activates KDO8N (a required 8-carbon sugar) for incorporation into bacterial lipopolysaccharide in the Shewanella genus. The sequence is that of 8-amino-3,8-dideoxy-manno-octulosonate cytidylyltransferase from Shewanella amazonensis (strain ATCC BAA-1098 / SB2B).